The chain runs to 85 residues: Large ribosomal subunit protein bL31B (85 aa).

The protein belongs to the bacterial ribosomal protein bL31 family. Type B subfamily. As to quaternary structure, part of the 50S ribosomal subunit.

The protein is Large ribosomal subunit protein bL31B of Macrococcus caseolyticus (strain JCSC5402) (Macrococcoides caseolyticum).